The sequence spans 394 residues: MTLDVPVNQGHVPPGSVACCLVGVTAVADGIAGHSLSNFGALPPEINSGRMYSGPGSGPLMAAAAAWDGLAAELSSAATGYGAAISELTNMRWWSGPASDSMVAAVLPFVGWLSTTATLAEQAAMQARAAAAAFEAAFAMTVPPPAIAANRTLLMTLVDTNWFGQNTPAIATTESQYAEMWAQDAAAMYGYASAAAPATVLTPFAPPPQTTNATGLVGHATAVAALRGQHSWAAAIPWSDIQKYWMMFLGALATAEGFIYDSGGLTLNALQFVGGMLWSTALAEAGAAEAAAGAGGAAGWSAWSQLGAGPVAASATLAAKIGPMSVPPGWSAPPATPQAQTVARSIPGIRSAAEAAETSVLLRGAPTPGRSRAAHMGRRYGRRLTVMADRPNVG.

It belongs to the mycobacterial PPE family.

This is an uncharacterized protein from Mycobacterium tuberculosis (strain CDC 1551 / Oshkosh).